The chain runs to 481 residues: Cysteine--tRNA ligase (481 aa).

Cys29 lines the Zn(2+) pocket. The 'HIGH' region motif lies at 31 to 41; sequence VTVYDYCHIGH. Zn(2+) is bound by residues Cys209, His234, and Glu238. The short motif at 266-270 is the 'KMSKS' region element; it reads KMSKS. Residue Lys269 coordinates ATP.

It belongs to the class-I aminoacyl-tRNA synthetase family. As to quaternary structure, monomer. Requires Zn(2+) as cofactor.

It is found in the cytoplasm. The enzyme catalyses tRNA(Cys) + L-cysteine + ATP = L-cysteinyl-tRNA(Cys) + AMP + diphosphate. The sequence is that of Cysteine--tRNA ligase from Syntrophotalea carbinolica (strain DSM 2380 / NBRC 103641 / GraBd1) (Pelobacter carbinolicus).